We begin with the raw amino-acid sequence, 532 residues long: Phosphoenolpyruvate carboxykinase (ATP) (532 aa).

Substrate is bound by residues R60, Y194, and K200. ATP is bound by residues K200, H219, and 237–245 (GLSGTGKTT). Mn(2+)-binding residues include K200 and H219. D258 provides a ligand contact to Mn(2+). E286, R324, and T449 together coordinate ATP. Substrate is bound at residue R324.

This sequence belongs to the phosphoenolpyruvate carboxykinase (ATP) family. Mn(2+) is required as a cofactor.

The protein localises to the cytoplasm. The catalysed reaction is oxaloacetate + ATP = phosphoenolpyruvate + ADP + CO2. The protein operates within carbohydrate biosynthesis; gluconeogenesis. In terms of biological role, involved in the gluconeogenesis. Catalyzes the conversion of oxaloacetate (OAA) to phosphoenolpyruvate (PEP) through direct phosphoryl transfer between the nucleoside triphosphate and OAA. The polypeptide is Phosphoenolpyruvate carboxykinase (ATP) (Cereibacter sphaeroides (strain ATCC 17025 / ATH 2.4.3) (Rhodobacter sphaeroides)).